The following is a 403-amino-acid chain: F-box only protein 22 (403 aa).

Met1 carries the N-acetylmethionine modification. The region spanning 21–67 is the F-box domain; sequence FVLSNLAEVVERVLTFLPAKALLRVACVCRLWRECVRRVLRTHRSVT. A Phosphothreonine modification is found at Thr127. The residue at position 128 (Ser128) is a Phosphoserine. N6-acetyllysine is present on Lys194.

Directly interacts with SKP1 and CUL1. Interacts (via C-terminal) with KDM4A. Interacts with TP53. Interacts with MTOR; this interaction promotes 'lys-27'-linked ubiquitination of MTOR. In terms of assembly, (Microbial infection) Interacts with SARS_COV-2 protein NSP5; this interaction attenuates NSP5-mediated inhibition of innate immunity. Post-translationally, phosphorylated by EIF2AK4 at Thr-127 causes cytoplasmic retention of FBXO22. Predominantly expressed in liver, also enriched in cardiac muscle.

It is found in the cytoplasm. The protein localises to the nucleus. The protein resides in the myofibril. It localises to the sarcomere. Its subcellular location is the z line. In terms of biological role, substrate-recognition component of the SCF (SKP1-CUL1-F-box protein)-type E3 ubiquitin ligase complex that is implicated in the control of various cellular processes such as cell cycle control, transcriptional regulation, DNA damage repair, and apoptosis. Promotes the proteasome-dependent degradation of key sarcomeric proteins, such as alpha-actinin (ACTN2) and filamin-C (FLNC), essential for maintenance of normal contractile function. Acts as a key regulator of histone methylation marks namely H3K9 and H3K36 methylation through the regulation of histone demethylase KDM4A protein levels. In complex with KDM4A, also regulates the abundance of TP53 by targeting methylated TP53 for degradation at the late senescent stage. Under oxidative stress, promotes the ubiquitination and degradation of BACH1. Mechanistically, reactive oxygen species (ROS) covalently modify cysteine residues on the bZIP domain of BACH1, leading to its release from chromatin and making it accessible to FBXO22. Upon amino acid depletion, mediates 'Lys-27'-linked ubiquitination of MTOR and thereby inhibits substrate recruitment to mTORC1. Also inhibits SARS-CoV-2 replication by inducing NSP5 degradation. In Homo sapiens (Human), this protein is F-box only protein 22 (FBXO22).